The primary structure comprises 974 residues: Cell division control protein 15 (974 aa).

One can recognise a Protein kinase domain in the interval 25–272; sequence YHLKQVIGRG…ADQLLKHVWI (248 aa). Residues 31 to 39 and Lys54 contribute to the ATP site; that span reads IGRGSYGVV. Asp146 serves as the catalytic Proton acceptor. Residues 360–702 form a self association domain region; that stretch reads CSLENIADTI…ITAICVEMSL (343 aa). Positions 554 to 563 are enriched in low complexity; that stretch reads SSSLPLSSSP. The tract at residues 554–592 is disordered; the sequence is SSSLPLSSSPTRNSPVNSVQSPSRSPVHSLMATRPSSPM. Phosphoserine is present on residues Ser561 and Ser567. Residues 564-579 are compositionally biased toward polar residues; that stretch reads TRNSPVNSVQSPSRSP. Residues 751-974 form an auto-inhibitory domain region; sequence TVGSSESHSV…FSVPITTFQT (224 aa). Position 870 is a phosphothreonine (Thr870). The interval 941 to 974 is disordered; that stretch reads AAIGSSPTKDERSNLRSSKDKSDGFSVPITTFQT. Residues 948–963 are compositionally biased toward basic and acidic residues; the sequence is TKDERSNLRSSKDKSD.

The protein belongs to the protein kinase superfamily. Ser/Thr protein kinase family. In terms of assembly, homodimer. Interacts with TEM1. In terms of processing, phosphorylation by CDK1 reduces the binding to the mother spindle pole body. The extent of phosphorylation gradually increases during cell-cycle progression until some point during late anaphase/telophase when it is rapidly dephosphorylated by CDC14. Phosphorylation inhibits kinase activity and dephosphorylation by CDC14 activates CDC15.

It is found in the cytoplasm. It localises to the cytoskeleton. The protein localises to the spindle pole. The protein resides in the bud neck. The catalysed reaction is L-seryl-[protein] + ATP = O-phospho-L-seryl-[protein] + ADP + H(+). The enzyme catalyses L-threonyl-[protein] + ATP = O-phospho-L-threonyl-[protein] + ADP + H(+). Kinase activity is inhibited by phosphorylation and activated by dephosphorylation by CDC14. In terms of biological role, protein kinase of the mitotic exit network (MEN) essential for late nuclear division in the mitotic cycle. Promotes mitotic exit by phosphorylating DBF2 and directly switching on DBF2 kinase activity. Involved in the localization of DBF2 and DBF20 to the neck which is necessary to undergo cytokinesis. Plays a role in segregation of chromosomes during recovery from spindle checkpoint activation. Required for spindle pole localization of CDK1 and inactivation of CDC2 kinase activity at the end of mitosis. Required for spindle disassembly after meiosis II and plays a role in spore morphogenesis. The sequence is that of Cell division control protein 15 (CDC15) from Saccharomyces cerevisiae (strain ATCC 204508 / S288c) (Baker's yeast).